The primary structure comprises 194 residues: Prostaglandin-H2 D-isomerase (194 aa).

A signal peptide spans 1–24; it reads MAASHTLWMGLVLLGVLGVLQTRA. Glutamine 25 is subject to Pyrrolidone carboxylic acid. An N-linked (GlcNAc...) asparagine glycan is attached at asparagine 51. Cysteine 65 serves as the catalytic Nucleophile. N-linked (GlcNAc...) asparagine glycosylation occurs at asparagine 78. The cysteines at positions 89 and 189 are disulfide-linked.

This sequence belongs to the calycin superfamily. Lipocalin family. In terms of assembly, monomer. In the male reproductive system, it is expressed in the testis and epididymis, and is secreted into the seminal fluid.

It is found in the rough endoplasmic reticulum. The protein resides in the nucleus membrane. It localises to the golgi apparatus. Its subcellular location is the cytoplasm. The protein localises to the perinuclear region. It is found in the secreted. The catalysed reaction is prostaglandin H2 = prostaglandin D2. Functionally, catalyzes the conversion of PGH2 to PGD2, a prostaglandin involved in smooth muscle contraction/relaxation and a potent inhibitor of platelet aggregation. Involved in a variety of CNS functions, such as sedation, NREM sleep and PGE2-induced allodynia, and may have an anti-apoptotic role in oligodendrocytes. Binds small non-substrate lipophilic molecules, including biliverdin, bilirubin, retinal, retinoic acid and thyroid hormone, and may act as a scavenger for harmful hydrophobic molecules and as a secretory retinoid and thyroid hormone transporter. Possibly involved in development and maintenance of the blood-brain, blood-retina, blood-aqueous humor and blood-testis barrier. It is likely to play important roles in both maturation and maintenance of the central nervous system and male reproductive system. Involved in PLA2G3-dependent maturation of mast cells. PLA2G3 is secreted by immature mast cells and acts on nearby fibroblasts upstream to PTDGS to synthesize PGD2, which in turn promotes mast cell maturation and degranulation via PTGDR. This Equus caballus (Horse) protein is Prostaglandin-H2 D-isomerase (PTGDS).